Here is a 479-residue protein sequence, read N- to C-terminus: Poly(A) polymerase catalytic subunit (479 aa).

Residues aspartate 202 and aspartate 204 contribute to the active site. Positions 202, 204, and 253 each coordinate Ca(2+).

The protein belongs to the poxviridae poly(A) polymerase catalytic subunit family. Heterodimer of a large (catalytic) subunit and a small (regulatory) subunit.

It catalyses the reaction RNA(n) + ATP = RNA(n)-3'-adenine ribonucleotide + diphosphate. Polymerase that creates the 3'-poly(A) tail of mRNA's. In Mus musculus (Mouse), this protein is Poly(A) polymerase catalytic subunit (OPG063).